A 510-amino-acid polypeptide reads, in one-letter code: Aromatic-L-amino-acid decarboxylase (510 aa).

The segment covering 1–17 (MSHIPISNTIPTKQTDG) has biased composition (polar residues). The interval 1 to 28 (MSHIPISNTIPTKQTDGNGKANISPDKL) is disordered. Thr117 serves as a coordination point for substrate. Residues Ala183, Ser184, His227, Asp305, and Asn334 each contribute to the pyridoxal 5'-phosphate site. His227 provides a ligand contact to substrate. Residue His227 is part of the active site. Lys337 is modified (N6-(pyridoxal phosphate)lysine). The segment at 358-384 (NAFNVDPLYLKHDMQGSAPDYRHWQIP) is disordered.

This sequence belongs to the group II decarboxylase family. Homodimer. Pyridoxal 5'-phosphate is required as a cofactor. As to expression, hypoderm isoform is expressed only in hypodermal epithelium and the CNS isoform only in central nervous system. Expressed in the adult head (at protein level).

The catalysed reaction is L-dopa + H(+) = dopamine + CO2. The enzyme catalyses 5-hydroxy-L-tryptophan + H(+) = serotonin + CO2. Catalyzes the decarboxylation of L-3,4-dihydroxyphenylalanine (L-DOPA) to dopamine and L-5-hydroxytryptophan (5-HTP) to serotonin. Catalyzes the formation of serotonin more efficiently than dopamine. Displays no activity to tyrosine. Variation in the synthesis of bioamines may be a factor contributing to natural variation in life span. The protein is Aromatic-L-amino-acid decarboxylase (Ddc) of Drosophila melanogaster (Fruit fly).